Consider the following 364-residue polypeptide: Mannonate dehydratase (364 aa).

It belongs to the mannonate dehydratase family. Fe(2+) is required as a cofactor. Mn(2+) serves as cofactor.

The catalysed reaction is D-mannonate = 2-dehydro-3-deoxy-D-gluconate + H2O. It participates in carbohydrate metabolism; pentose and glucuronate interconversion. Its function is as follows. Catalyzes the dehydration of D-mannonate. The chain is Mannonate dehydratase from Endomicrobium trichonymphae.